A 618-amino-acid polypeptide reads, in one-letter code: UvrABC system protein C (618 aa).

The GIY-YIG domain maps to T20 to V98. In terms of domain architecture, UVR spans D207 to M242.

Belongs to the UvrC family. As to quaternary structure, interacts with UvrB in an incision complex.

It is found in the cytoplasm. Functionally, the UvrABC repair system catalyzes the recognition and processing of DNA lesions. UvrC both incises the 5' and 3' sides of the lesion. The N-terminal half is responsible for the 3' incision and the C-terminal half is responsible for the 5' incision. This chain is UvrABC system protein C, found in Xanthomonas oryzae pv. oryzae (strain MAFF 311018).